The sequence spans 766 residues: FYVE, RhoGEF and PH domain-containing protein 4 (766 aa).

Residues 1 to 150 (MEESNPAPTS…SSVTNSHDEN (150 aa)) are actin filament-binding. Composition is skewed to polar residues over residues 43-65 (STMN…TPQK), 132-145 (RNET…SVTN), and 152-161 (CDSSCRTQGT). Residues 43-167 (STMNLNIPQT…TQGTDLGLPS (125 aa)) form a disordered region. Residues 206–393 (KLHKIATELL…STAASHSNSA (188 aa)) enclose the DH domain. In terms of domain architecture, PH 1 spans 422–521 (ELIKEGQILK…WIKALQESID (100 aa)). An FYVE-type zinc finger spans residues 559 to 619 (DNEVTMCMKC…VCKDCYQIMS (61 aa)). Residues Cys-565, Cys-568, Cys-582, Cys-585, Cys-590, Cys-593, Cys-611, and Cys-614 each coordinate Zn(2+). The 98-residue stretch at 643–740 (NSEVCSFLQY…WLKIILLAVT (98 aa)) folds into the PH 2 domain. Residues Ser-702 and Ser-716 each carry the phosphoserine modification. The tract at residues 745-766 (DGPSEHLDTLDNLPGPKEKSEC) is disordered.

As to quaternary structure, homooligomer. Detected in brain, lung, liver, skeletal muscle, kidney, testis and cultured hippocampal neurons.

The protein localises to the cytoplasm. It localises to the cytoskeleton. It is found in the cell projection. Its subcellular location is the filopodium. In terms of biological role, activates CDC42, a member of the Ras-like family of Rho- and Rac proteins, by exchanging bound GDP for free GTP. Plays a role in regulating the actin cytoskeleton and cell shape. Activates MAPK8. This chain is FYVE, RhoGEF and PH domain-containing protein 4 (Fgd4), found in Rattus norvegicus (Rat).